Consider the following 420-residue polypeptide: uncharacterized protein (420 aa).

This is an uncharacterized protein from Pseudanabaena tenuis (strain PCC 7409).